We begin with the raw amino-acid sequence, 386 residues long: Synaptotagmin-5 (386 aa).

The segment covering 1 to 16 has biased composition (pro residues); that stretch reads MFPEPPTPGSPAPETP. Residues 1–21 are disordered; it reads MFPEPPTPGSPAPETPPDSSR. The Vesicular portion of the chain corresponds to 1–24; it reads MFPEPPTPGSPAPETPPDSSRIRQ. A helical transmembrane segment spans residues 25–45; it reads GAVPAWVLATILLGSGLLVFS. The Cytoplasmic portion of the chain corresponds to 46 to 386; the sequence is SCFCLYRKRC…PDRARPIPAP (341 aa). C2 domains follow at residues 108 to 227 and 239 to 372; these read QLGR…QAWR and KLGD…AQWH. Ca(2+)-binding residues include Leu-138, Asp-139, Asp-145, Asp-197, Phe-198, Asp-199, Ser-202, Asp-205, Asp-270, Asp-276, Asp-330, and Asp-332.

Belongs to the synaptotagmin family. As to quaternary structure, homodimer. Interacts with both alpha- and beta-tubulin. The cofactor is Ca(2+). As to expression, expressed in kidney, adipose tissue, lung and heart, as well as at higher levels in brain.

The protein resides in the cytoplasmic vesicle. It localises to the secretory vesicle. The protein localises to the synaptic vesicle membrane. It is found in the recycling endosome membrane. In terms of biological role, may be involved in Ca(2+)-dependent exocytosis of secretory vesicles through Ca(2+) and phospholipid binding to the C2 domain or may serve as Ca(2+) sensors in the process of vesicular trafficking and exocytosis. Regulates the Ca(2+)-dependent secretion of norepinephrine in PC12 cells. Required for export from the endocytic recycling compartment to the cell surface. This is Synaptotagmin-5 (Syt5) from Rattus norvegicus (Rat).